Here is a 122-residue protein sequence, read N- to C-terminus: Large ribosomal subunit protein uL14 (122 aa).

Belongs to the universal ribosomal protein uL14 family. Part of the 50S ribosomal subunit. Forms a cluster with proteins L3 and L19. In the 70S ribosome, L14 and L19 interact and together make contacts with the 16S rRNA in bridges B5 and B8.

Binds to 23S rRNA. Forms part of two intersubunit bridges in the 70S ribosome. The protein is Large ribosomal subunit protein uL14 of Psychrobacter sp. (strain PRwf-1).